The following is a 330-amino-acid chain: Glycerol-3-phosphate dehydrogenase [NAD(P)+] (330 aa).

3 residues coordinate NADPH: Trp-11, Arg-33, and Lys-105. Sn-glycerol 3-phosphate is bound by residues Lys-105, Gly-133, and Ser-135. NADPH is bound at residue Ala-137. The sn-glycerol 3-phosphate site is built by Lys-188, Asp-241, Ser-251, Arg-252, and Asn-253. The active-site Proton acceptor is the Lys-188. Arg-252 is an NADPH binding site. NADPH is bound by residues Val-276 and Glu-278.

Belongs to the NAD-dependent glycerol-3-phosphate dehydrogenase family.

The protein resides in the cytoplasm. The enzyme catalyses sn-glycerol 3-phosphate + NAD(+) = dihydroxyacetone phosphate + NADH + H(+). The catalysed reaction is sn-glycerol 3-phosphate + NADP(+) = dihydroxyacetone phosphate + NADPH + H(+). Its pathway is membrane lipid metabolism; glycerophospholipid metabolism. Functionally, catalyzes the reduction of the glycolytic intermediate dihydroxyacetone phosphate (DHAP) to sn-glycerol 3-phosphate (G3P), the key precursor for phospholipid synthesis. This is Glycerol-3-phosphate dehydrogenase [NAD(P)+] from Acidovorax sp. (strain JS42).